Consider the following 203-residue polypeptide: UPF0637 protein SH1846 (203 aa).

It belongs to the UPF0637 family.

The sequence is that of UPF0637 protein SH1846 from Staphylococcus haemolyticus (strain JCSC1435).